We begin with the raw amino-acid sequence, 334 residues long: Cyclin N-terminal domain-containing protein 1 (334 aa).

The region spanning 29–180 (NALLHLAQQN…ILKSLNFQIN (152 aa)) is the Cyclin N-terminal domain.

As to quaternary structure, interacts with PRR19; this interaction promotes crossover formation. Interacts with RFC3 and RFC4; these interactions facilitate crossover formation. Interacts with CDC34; this interaction regulates the cell-cycle progression. As to expression, isoform 2 is expressed in spermatocyte.

It localises to the nucleus. The protein resides in the cytoplasm. It is found in the chromosome. Plays a role in the different steps of crossover formation during meiotic recombination. Participates in the crossover differentiation step of crossover-specific recombination intermediates through its interaction with PRR19. In addition, stimulates crossover formation through the interactions with RFC3 and RFC4 and simultaneously regulates cell-cycle progression through interactions with CDC34 and subsequent ubiquitination of WEE1. May also participates in an active deselection process that destabilizes or removes excess pre-CO intermediates. This chain is Cyclin N-terminal domain-containing protein 1, found in Mus musculus (Mouse).